The chain runs to 185 residues: RRM domain-containing protein ECU09_1470 (185 aa).

2 consecutive RRM domains span residues 8–87 (NQLA…YAKR) and 101–170 (KKVY…PAYE).

This chain is RRM domain-containing protein ECU09_1470, found in Encephalitozoon cuniculi (strain GB-M1) (Microsporidian parasite).